We begin with the raw amino-acid sequence, 378 residues long: Ribosomal RNA large subunit methyltransferase G (378 aa).

It belongs to the methyltransferase superfamily. RlmG family.

It localises to the cytoplasm. It catalyses the reaction guanosine(1835) in 23S rRNA + S-adenosyl-L-methionine = N(2)-methylguanosine(1835) in 23S rRNA + S-adenosyl-L-homocysteine + H(+). In terms of biological role, specifically methylates the guanine in position 1835 (m2G1835) of 23S rRNA. In Escherichia coli O139:H28 (strain E24377A / ETEC), this protein is Ribosomal RNA large subunit methyltransferase G.